The following is a 355-amino-acid chain: Peptide chain release factor 1 (355 aa).

Gln233 bears the N5-methylglutamine mark. Residues 280-293 show a composition bias toward basic and acidic residues; that stretch reads ERRKKEQERADSRR. The disordered stretch occupies residues 280–308; it reads ERRKKEQERADSRRGQVGSGDRSERIRTY.

The protein belongs to the prokaryotic/mitochondrial release factor family. In terms of processing, methylated by PrmC. Methylation increases the termination efficiency of RF1.

The protein resides in the cytoplasm. Its function is as follows. Peptide chain release factor 1 directs the termination of translation in response to the peptide chain termination codons UAG and UAA. The chain is Peptide chain release factor 1 from Rickettsia peacockii (strain Rustic).